The sequence spans 114 residues: Ribonuclease P protein component (114 aa).

The protein belongs to the RnpA family. As to quaternary structure, consists of a catalytic RNA component (M1 or rnpB) and a protein subunit.

It catalyses the reaction Endonucleolytic cleavage of RNA, removing 5'-extranucleotides from tRNA precursor.. Functionally, RNaseP catalyzes the removal of the 5'-leader sequence from pre-tRNA to produce the mature 5'-terminus. It can also cleave other RNA substrates such as 4.5S RNA. The protein component plays an auxiliary but essential role in vivo by binding to the 5'-leader sequence and broadening the substrate specificity of the ribozyme. The sequence is that of Ribonuclease P protein component from Borrelia hermsii (strain HS1 / DAH).